We begin with the raw amino-acid sequence, 94 residues long: Co-chaperonin GroES (94 aa).

This sequence belongs to the GroES chaperonin family. As to quaternary structure, heptamer of 7 subunits arranged in a ring. Interacts with the chaperonin GroEL.

It is found in the cytoplasm. In terms of biological role, together with the chaperonin GroEL, plays an essential role in assisting protein folding. The GroEL-GroES system forms a nano-cage that allows encapsulation of the non-native substrate proteins and provides a physical environment optimized to promote and accelerate protein folding. GroES binds to the apical surface of the GroEL ring, thereby capping the opening of the GroEL channel. In Clostridium beijerinckii (strain ATCC 51743 / NCIMB 8052) (Clostridium acetobutylicum), this protein is Co-chaperonin GroES.